The primary structure comprises 387 residues: Phosphoglycerate kinase (387 aa).

Residues 21–23 (DLN), Arg36, 59–62 (HLGR), Arg113, and Arg146 each bind substrate. ATP contacts are provided by residues Lys197, Glu314, and 340–343 (GGDT).

It belongs to the phosphoglycerate kinase family. In terms of assembly, monomer.

It is found in the cytoplasm. The enzyme catalyses (2R)-3-phosphoglycerate + ATP = (2R)-3-phospho-glyceroyl phosphate + ADP. It participates in carbohydrate degradation; glycolysis; pyruvate from D-glyceraldehyde 3-phosphate: step 2/5. This is Phosphoglycerate kinase from Pseudomonas aeruginosa (strain ATCC 15692 / DSM 22644 / CIP 104116 / JCM 14847 / LMG 12228 / 1C / PRS 101 / PAO1).